A 427-amino-acid chain; its full sequence is Tuberculostearic acid methyltransferase UfaA1 (427 aa).

Belongs to the CFA/CMAS family.

It functions in the pathway lipid metabolism; fatty acid biosynthesis. With respect to regulation, inhibited by S-adenosyl-L-homocysteine. Its function is as follows. Involved in the biosynthesis of the tuberculostearic acid (10-methylstearic-acid or TSA), a constituent lipid of the mycobacterial cell wall. Catalyzes the transfer of the methyl group from S-adenosyl-L-methionine (SAM) to the double bond of oleic acid in phosphatidylethanolamine or phosphatidylcholine to produce TSA. This Mycobacterium tuberculosis (strain ATCC 25618 / H37Rv) protein is Tuberculostearic acid methyltransferase UfaA1.